Consider the following 200-residue polypeptide: WUSCHEL-related homeobox 9 (200 aa).

Positions 10-74 form a DNA-binding region, homeobox; WUS-type; the sequence is VKCGRWNPTA…NHKARERHHH (65 aa). Basic residues predominate over residues 70-80; the sequence is ERHHHKKRRRG. The disordered stretch occupies residues 70–118; sequence ERHHHKKRRRGASSPDSGSNDDDGRAAAHEGDADLVLQPPESKREARSY. Positions 91-101 are enriched in basic and acidic residues; sequence DDGRAAAHEGD.

Belongs to the WUS homeobox family. Specifically expressed in the central cells of the quiescent center (QC) of the root.

The protein resides in the nucleus. In terms of biological role, transcription factor which may be involved in the specification and maintenance of the stem cells (QC cells) in the root apical meristem (RAM). This chain is WUSCHEL-related homeobox 9 (WOX9), found in Oryza sativa subsp. japonica (Rice).